A 244-amino-acid polypeptide reads, in one-letter code: ATP synthase subunit b 2 (244 aa).

A helical transmembrane segment spans residues 2-22; it reads LIDWFTIVAQIINFLILVFLL.

Belongs to the ATPase B chain family. In terms of assembly, F-type ATPases have 2 components, F(1) - the catalytic core - and F(0) - the membrane proton channel. F(1) has five subunits: alpha(3), beta(3), gamma(1), delta(1), epsilon(1). F(0) has four main subunits: a(1), b(1), b'(1) and c(10-14). The alpha and beta chains form an alternating ring which encloses part of the gamma chain. F(1) is attached to F(0) by a central stalk formed by the gamma and epsilon chains, while a peripheral stalk is formed by the delta, b and b' chains.

The protein resides in the cellular thylakoid membrane. Functionally, f(1)F(0) ATP synthase produces ATP from ADP in the presence of a proton or sodium gradient. F-type ATPases consist of two structural domains, F(1) containing the extramembraneous catalytic core and F(0) containing the membrane proton channel, linked together by a central stalk and a peripheral stalk. During catalysis, ATP synthesis in the catalytic domain of F(1) is coupled via a rotary mechanism of the central stalk subunits to proton translocation. Component of the F(0) channel, it forms part of the peripheral stalk, linking F(1) to F(0). The sequence is that of ATP synthase subunit b 2 from Crocosphaera subtropica (strain ATCC 51142 / BH68) (Cyanothece sp. (strain ATCC 51142)).